Reading from the N-terminus, the 239-residue chain is Ribonuclease PH (239 aa).

Residues R86 and 124-126 (GTR) each bind phosphate.

Belongs to the RNase PH family. Homohexameric ring arranged as a trimer of dimers.

It carries out the reaction tRNA(n+1) + phosphate = tRNA(n) + a ribonucleoside 5'-diphosphate. In terms of biological role, phosphorolytic 3'-5' exoribonuclease that plays an important role in tRNA 3'-end maturation. Removes nucleotide residues following the 3'-CCA terminus of tRNAs; can also add nucleotides to the ends of RNA molecules by using nucleoside diphosphates as substrates, but this may not be physiologically important. Probably plays a role in initiation of 16S rRNA degradation (leading to ribosome degradation) during starvation. The sequence is that of Ribonuclease PH from Rickettsia akari (strain Hartford).